Consider the following 34-residue polypeptide: Photosystem II reaction center protein T (34 aa).

A helical membrane pass occupies residues A3–F23.

It belongs to the PsbT family. As to quaternary structure, PSII is composed of 1 copy each of membrane proteins PsbA, PsbB, PsbC, PsbD, PsbE, PsbF, PsbH, PsbI, PsbJ, PsbK, PsbL, PsbM, PsbT, PsbY, PsbZ, Psb30/Ycf12, at least 3 peripheral proteins of the oxygen-evolving complex and a large number of cofactors. It forms dimeric complexes.

It is found in the plastid. The protein resides in the chloroplast thylakoid membrane. Found at the monomer-monomer interface of the photosystem II (PS II) dimer, plays a role in assembly and dimerization of PSII. PSII is a light-driven water plastoquinone oxidoreductase, using light energy to abstract electrons from H(2)O, generating a proton gradient subsequently used for ATP formation. This chain is Photosystem II reaction center protein T, found in Atropa belladonna (Belladonna).